We begin with the raw amino-acid sequence, 701 residues long: Potassium-transporting ATPase ATP-binding subunit (701 aa).

The interval 1–28 is disordered; that stretch reads MNPDAPTPKNKSSRSRPSDRPQARKKAK. 4 helical membrane passes run 57–77, 90–110, 245–265, and 276–296; these read MFLV…PNLF, GILT…EAVA, VLLA…PVFA, and ILVA…LSAI. Asp-329 serves as the catalytic 4-aspartylphosphate intermediate. Residues Asp-366, Glu-370, 397–404, and Lys-416 contribute to the ATP site; that span reads FSAKTRMS. Residues Asp-539 and Asp-543 each coordinate Mg(2+). The next 3 helical transmembrane spans lie at 599–619, 635–655, and 681–701; these read FSLA…FASA, AVLS…PLAL, and VIAP…VGLA.

This sequence belongs to the cation transport ATPase (P-type) (TC 3.A.3) family. Type IA subfamily. As to quaternary structure, the system is composed of three essential subunits: KdpA, KdpB and KdpC.

It is found in the cell membrane. The enzyme catalyses K(+)(out) + ATP + H2O = K(+)(in) + ADP + phosphate + H(+). In terms of biological role, part of the high-affinity ATP-driven potassium transport (or Kdp) system, which catalyzes the hydrolysis of ATP coupled with the electrogenic transport of potassium into the cytoplasm. This subunit is responsible for energy coupling to the transport system and for the release of the potassium ions to the cytoplasm. This Anabaena sp. (strain L31) protein is Potassium-transporting ATPase ATP-binding subunit.